Consider the following 98-residue polypeptide: NADH-ubiquinone oxidoreductase chain 4L (98 aa).

The next 3 helical transmembrane spans lie at 1 to 21, 29 to 49, and 61 to 81; these read MSLT…GLLM, SLLC…MTIL, and IILL…LVMV.

The protein belongs to the complex I subunit 4L family. Core subunit of respiratory chain NADH dehydrogenase (Complex I) which is composed of 45 different subunits.

Its subcellular location is the mitochondrion inner membrane. The enzyme catalyses a ubiquinone + NADH + 5 H(+)(in) = a ubiquinol + NAD(+) + 4 H(+)(out). Core subunit of the mitochondrial membrane respiratory chain NADH dehydrogenase (Complex I) which catalyzes electron transfer from NADH through the respiratory chain, using ubiquinone as an electron acceptor. Part of the enzyme membrane arm which is embedded in the lipid bilayer and involved in proton translocation. In Chiroderma trinitatum (Little big-eyed bat), this protein is NADH-ubiquinone oxidoreductase chain 4L (MT-ND4L).